Reading from the N-terminus, the 177-residue chain is Ribosome maturation factor RimM (177 aa).

In terms of domain architecture, PRC barrel spans 98–177; sequence GEEFYWRELY…RIEVDWDPGF (80 aa).

It belongs to the RimM family. As to quaternary structure, binds ribosomal protein uS19.

The protein resides in the cytoplasm. Functionally, an accessory protein needed during the final step in the assembly of 30S ribosomal subunit, possibly for assembly of the head region. Essential for efficient processing of 16S rRNA. May be needed both before and after RbfA during the maturation of 16S rRNA. It has affinity for free ribosomal 30S subunits but not for 70S ribosomes. This is Ribosome maturation factor RimM from Photobacterium profundum (strain SS9).